The following is a 119-amino-acid chain: Large ribosomal subunit protein bL20 (119 aa).

The protein belongs to the bacterial ribosomal protein bL20 family.

Its function is as follows. Binds directly to 23S ribosomal RNA and is necessary for the in vitro assembly process of the 50S ribosomal subunit. It is not involved in the protein synthesizing functions of that subunit. The protein is Large ribosomal subunit protein bL20 of Verminephrobacter eiseniae (strain EF01-2).